Here is a 277-residue protein sequence, read N- to C-terminus: Carbonyl reductase [NADPH] 1 (277 aa).

NADP(+)-binding positions include 10-34 (VTGSNKGIGLAIVRDLCRLFSGEVV), 63-64 (DI), and N90. S30 is subject to Phosphoserine. Glutathione contacts are provided by residues 95–97 (FKV) and Q106. Position 140 (S140) interacts with substrate. 193-194 (AY) contacts glutathione. The active-site Proton acceptor is Y194. NADP(+)-binding positions include 194–198 (YGVTK) and 231–233 (VRT).

Belongs to the short-chain dehydrogenases/reductases (SDR) family. In terms of assembly, monomer.

It localises to the cytoplasm. The catalysed reaction is a secondary alcohol + NADP(+) = a ketone + NADPH + H(+). It carries out the reaction prostaglandin F2alpha + NADP(+) = prostaglandin E2 + NADPH + H(+). It catalyses the reaction prostaglandin E1 + NADP(+) = 15-oxoprostaglandin E1 + NADPH + H(+). The enzyme catalyses prostaglandin D2 + NADP(+) = 15-oxoprostaglandin D2 + NADPH + H(+). The catalysed reaction is menadione + NADPH + H(+) = menadiol + NADP(+). It carries out the reaction prostaglandin E2 + NADP(+) = 15-oxoprostaglandin E2 + NADPH + H(+). It catalyses the reaction prostaglandin F2alpha + NADP(+) = 15-oxoprostaglandin F2alpha + NADPH + H(+). The enzyme catalyses daunorubicin + NADPH + H(+) = 13-dihydrodaunorubicin + NADP(+). The catalysed reaction is S-nitrosoglutathione + NADPH + H(+) = S-(hydroxysulfenamide)glutathione + NADP(+). It carries out the reaction a primary alcohol + NADP(+) = an aldehyde + NADPH + H(+). It catalyses the reaction cortisol + NADPH + H(+) = 20beta-dihydrocortisol + NADP(+). The enzyme catalyses corticosterone + NADPH + H(+) = 20beta-dihydrocorticosterone + NADP(+). Functionally, NADPH-dependent reductase with broad substrate specificity. Catalyzes the reduction of a wide variety of carbonyl compounds including quinones, prostaglandins, menadione, plus various xenobiotics. Catalyzes the reduction of the antitumor anthracyclines doxorubicin and daunorubicin to the cardiotoxic compounds doxorubicinol and daunorubicinol. Can convert prostaglandin E to prostaglandin F2-alpha. Can bind glutathione, which explains its higher affinity for glutathione-conjugated substrates. Catalyzes the reduction of S-nitrosoglutathione. In addition, participates in the glucocorticoid metabolism by catalyzing the NADPH-dependent cortisol/corticosterone into 20beta-dihydrocortisol (20b-DHF) or 20beta-corticosterone (20b-DHB), which are weak agonists of NR3C1 and NR3C2 in adipose tissue. This Macaca fascicularis (Crab-eating macaque) protein is Carbonyl reductase [NADPH] 1.